We begin with the raw amino-acid sequence, 198 residues long: Ribonuclease HII (198 aa).

Residues 3-194 (RRVCGVDEAG…VKRCLALGQQ (192 aa)) form the RNase H type-2 domain. A divalent metal cation contacts are provided by aspartate 9, glutamate 10, and aspartate 101.

It belongs to the RNase HII family. Mn(2+) serves as cofactor. Requires Mg(2+) as cofactor.

Its subcellular location is the cytoplasm. It catalyses the reaction Endonucleolytic cleavage to 5'-phosphomonoester.. Endonuclease that specifically degrades the RNA of RNA-DNA hybrids. In Laribacter hongkongensis (strain HLHK9), this protein is Ribonuclease HII.